Here is a 397-residue protein sequence, read N- to C-terminus: 1-carboxy-3-chloro-3,4-dihydroxycyclo hexa-1,5-diene dehydrogenase (397 aa).

To P.putida PHT4.

The sequence is that of 1-carboxy-3-chloro-3,4-dihydroxycyclo hexa-1,5-diene dehydrogenase (cbaC) from Comamonas testosteroni (Pseudomonas testosteroni).